Here is a 240-residue protein sequence, read N- to C-terminus: tRNA (guanine-N(7)-)-methyltransferase (240 aa).

S-adenosyl-L-methionine-binding residues include glutamate 70, glutamate 95, aspartate 122, and aspartate 145. Aspartate 145 is an active-site residue. Substrate is bound by residues lysine 149, aspartate 181, and 218 to 221 (TKFE).

Belongs to the class I-like SAM-binding methyltransferase superfamily. TrmB family.

The catalysed reaction is guanosine(46) in tRNA + S-adenosyl-L-methionine = N(7)-methylguanosine(46) in tRNA + S-adenosyl-L-homocysteine. The protein operates within tRNA modification; N(7)-methylguanine-tRNA biosynthesis. In terms of biological role, catalyzes the formation of N(7)-methylguanine at position 46 (m7G46) in tRNA. This is tRNA (guanine-N(7)-)-methyltransferase from Pseudomonas entomophila (strain L48).